The primary structure comprises 177 residues: Inorganic pyrophosphatase (177 aa).

Substrate-binding residues include lysine 31, arginine 45, and tyrosine 57. Mg(2+) is bound by residues aspartate 67, aspartate 72, and aspartate 104. Residue tyrosine 141 participates in substrate binding.

The protein belongs to the PPase family. Homohexamer. Mg(2+) serves as cofactor.

It is found in the cytoplasm. The enzyme catalyses diphosphate + H2O = 2 phosphate + H(+). Catalyzes the hydrolysis of inorganic pyrophosphate (PPi) forming two phosphate ions. The chain is Inorganic pyrophosphatase from Halobacterium salinarum (strain ATCC 700922 / JCM 11081 / NRC-1) (Halobacterium halobium).